The primary structure comprises 442 residues: Type 3 secretion system ATPase (442 aa).

173–178 serves as a coordination point for ATP; that stretch reads GVGKST.

The protein belongs to the ATPase alpha/beta chains family. T3SS ATPase subfamily. The core secretion machinery of the T3SS is composed of approximately 20 different proteins, including cytoplasmic components, a base, an export apparatus and a needle. This subunit is part of the cytosolic complex. Forms homohexamers.

It is found in the cytoplasm. It carries out the reaction ATP + H2O + cellular proteinSide 1 = ADP + phosphate + cellular proteinSide 2.. Its function is as follows. ATPase component of the type III secretion system (T3SS), also called injectisome, which is used to inject bacterial effector proteins into eukaryotic host cells. Acts as a molecular motor to provide the energy that is required for the export of proteins. Required for type III secretion apparatus (T3SA) formation, proper protein secretion, host cell invasion and virulence. May play a critical role in T3SS substrate recognition, disassembly of the effector/chaperone complex and unfolding of the effector in an ATP-dependent manner prior to secretion. The sequence is that of Type 3 secretion system ATPase from Xanthomonas euvesicatoria.